The chain runs to 202 residues: Na(+)-translocating NADH-quinone reductase subunit E (202 aa).

Helical transmembrane passes span 11-31, 35-55, 81-101, 114-134, 144-164, and 180-200; these read AVFIENLALSFFLGMCTFLAV, VTTSIGLGVAVIVVLGISVPV, FLRFLTFIGVIAALVQILEMA, GIFLPLITVNCAIFGAVSFMV, VVYGIGAGVGWALAITLLAGI, and LGITFITVGLMALGFMSFSGI.

It belongs to the NqrDE/RnfAE family. In terms of assembly, composed of six subunits; NqrA, NqrB, NqrC, NqrD, NqrE and NqrF.

Its subcellular location is the cell inner membrane. The catalysed reaction is a ubiquinone + n Na(+)(in) + NADH + H(+) = a ubiquinol + n Na(+)(out) + NAD(+). In terms of biological role, NQR complex catalyzes the reduction of ubiquinone-1 to ubiquinol by two successive reactions, coupled with the transport of Na(+) ions from the cytoplasm to the periplasm. NqrA to NqrE are probably involved in the second step, the conversion of ubisemiquinone to ubiquinol. The chain is Na(+)-translocating NADH-quinone reductase subunit E from Pseudoalteromonas translucida (strain TAC 125).